Reading from the N-terminus, the 692-residue chain is Protein artemis (692 aa).

Threonine 380 bears the Phosphothreonine mark. Residue serine 385 is modified to Phosphoserine. Disordered stretches follow at residues 504-555 (LENF…DSQS) and 640-664 (STNA…LPKR). Over residues 506–520 (NFPSSTVAGGSQSPK) the composition is skewed to polar residues. The segment covering 530 to 543 (THISSQNSSQSTHI) has biased composition (low complexity). Polar residues-rich tracts occupy residues 544-555 (TEQGSQGWDSQS) and 640-650 (STNADSQSSSD). Serine 645 is modified (phosphoserine; by ATM).

The protein belongs to the DNA repair metallo-beta-lactamase (DRMBL) family. As to quaternary structure, interacts with LIG4; the interaction is direct. Interacts with ATM. Interacts with BRCA1. Interacts with PRKDC. Interacts with TP53BP1. Also exhibits ATM- and phosphorylation-dependent interaction with the MRN complex, composed of MRE11, RAD50, and NBN. In terms of processing, phosphorylation on undefined residues by PRKDC may stimulate endonucleolytic activity on 5' and 3' hairpins and overhangs. PRKDC must remain present, even after phosphorylation, for efficient hairpin opening. Also phosphorylated by ATM in response to ionizing radiation (IR) and by ATR in response to ultraviolet (UV) radiation. As to expression, ubiquitously expressed, with highest levels in the kidney, lung, pancreas and placenta (at the mRNA level). Expression is not increased in thymus or bone marrow, sites of V(D)J recombination.

It localises to the nucleus. In terms of biological role, nuclease involved in DNA non-homologous end joining (NHEJ); required for double-strand break repair and V(D)J recombination. Required for V(D)J recombination, the process by which exons encoding the antigen-binding domains of immunoglobulins and T-cell receptor proteins are assembled from individual V, (D), and J gene segments. V(D)J recombination is initiated by the lymphoid specific RAG endonuclease complex, which generates site specific DNA double strand breaks (DSBs). These DSBs present two types of DNA end structures: hairpin sealed coding ends and phosphorylated blunt signal ends. These ends are independently repaired by the non homologous end joining (NHEJ) pathway to form coding and signal joints respectively. This protein exhibits single-strand specific 5'-3' exonuclease activity in isolation and acquires endonucleolytic activity on 5' and 3' hairpins and overhangs when in a complex with PRKDC. The latter activity is required specifically for the resolution of closed hairpins prior to the formation of the coding joint. Also required for the repair of complex DSBs induced by ionizing radiation, which require substantial end-processing prior to religation by NHEJ. The chain is Protein artemis from Homo sapiens (Human).